Consider the following 130-residue polypeptide: Small ribosomal subunit protein uS9 (130 aa).

This sequence belongs to the universal ribosomal protein uS9 family.

The polypeptide is Small ribosomal subunit protein uS9 (Aster yellows witches'-broom phytoplasma (strain AYWB)).